The sequence spans 775 residues: Putative late blight resistance protein homolog R1A-3 (775 aa).

A coiled-coil region spans residues 16-39; it reads PRMNEEIVGFEDVIENLRKKLLSE. Residues 17 to 237 enclose the NB-ARC domain; it reads RMNEEIVGFE…LSEMEKEVEC (221 aa). 50-57 serves as a coordination point for ATP; sequence GMPGLGKT. In terms of domain architecture, HMA spans 711–775; sequence IKKMILQFDI…VGKLIDSGML (65 aa).

It belongs to the disease resistance NB-LRR family.

It is found in the cytoplasm. It localises to the membrane. Functionally, confers resistance to late blight (Phytophthora infestans) races carrying the avirulence gene Avr1. Resistance proteins guard the plant against pathogens that contain an appropriate avirulence protein via an indirect interaction with this avirulence protein. That triggers a defense system including the hypersensitive response, which restricts the pathogen growth. This chain is Putative late blight resistance protein homolog R1A-3 (R1A-3), found in Solanum demissum (Wild potato).